Consider the following 202-residue polypeptide: Small ribosomal subunit protein uS4c (202 aa).

The region spanning Met-90–Leu-165 is the S4 RNA-binding domain.

It belongs to the universal ribosomal protein uS4 family. In terms of assembly, part of the 30S ribosomal subunit. Contacts protein S5. The interaction surface between S4 and S5 is involved in control of translational fidelity.

It localises to the plastid. Its subcellular location is the chloroplast. Its function is as follows. One of the primary rRNA binding proteins, it binds directly to 16S rRNA where it nucleates assembly of the body of the 30S subunit. With S5 and S12 plays an important role in translational accuracy. This Diphyscium foliosum (Nut-moss) protein is Small ribosomal subunit protein uS4c (rps4).